The following is a 158-amino-acid chain: Snaclec coagulation factor X-activating enzyme light chain 2 (158 aa).

Residues 1-24 (MGRFISVSFGLLVVFLSLSGTGAG) form the signal peptide. Disulfide bonds link C27–C38, C55–C152, and C127–C144. Residues 34-153 (YRYFCYRVFK…CEERYLFVCK (120 aa)) form the C-type lectin domain. An N-linked (GlcNAc...) (complex) asparagine glycan is attached at N82.

The protein belongs to the snaclec family. Heterotrimer; disulfide-linked. The heterotrimer consists of 1 heavy chain (a metalloproteinase) and 2 light chains: LC1 and LC2. N-glycosylated; probably required for conformation. Removal of easily accessible sugars does not change its functional capacity, but removal of the core sugars with N-glycanase causes a virtually complete loss of enzyme activity, apparently as a result of major conformational changes in the molecule. Not O-glycosylated. Expressed by the venom gland.

Its subcellular location is the secreted. Its function is as follows. Regulatory subunit of the blood coagulation factor X- and IX-activating enzyme. The enzyme activates coagulation factor X (F10) by cleaving the Arg-Ile bond and is also able to activate coagulation factor IX (F9) and protein S (PROS1) by specific cleavage of Arg-Ile and Arg-Val bonds. May serve as an exosite by which the enzyme recognizes and binds to the Gla domain of factor X (F10) and factor IX (F9) in a calcium-dependent manner. The protein is Snaclec coagulation factor X-activating enzyme light chain 2 (LC2) of Daboia siamensis (Eastern Russel's viper).